The primary structure comprises 341 residues: L-threonine 3-dehydrogenase (341 aa).

Cys-38 is a binding site for Zn(2+). Residues Thr-40 and His-43 each act as charge relay system in the active site. Zn(2+)-binding residues include His-63, Glu-64, Cys-93, Cys-96, Cys-99, and Cys-107. Residues Ile-175, Asp-195, Arg-200, 262–264 (LGI), and 286–287 (IY) contribute to the NAD(+) site.

This sequence belongs to the zinc-containing alcohol dehydrogenase family. In terms of assembly, homotetramer. Requires Zn(2+) as cofactor.

The protein resides in the cytoplasm. The catalysed reaction is L-threonine + NAD(+) = (2S)-2-amino-3-oxobutanoate + NADH + H(+). It participates in amino-acid degradation; L-threonine degradation via oxydo-reductase pathway; glycine from L-threonine: step 1/2. In terms of biological role, catalyzes the NAD(+)-dependent oxidation of L-threonine to 2-amino-3-ketobutyrate. This chain is L-threonine 3-dehydrogenase, found in Shewanella putrefaciens (strain CN-32 / ATCC BAA-453).